The following is a 111-amino-acid chain: Thioredoxin 2 (111 aa).

The Thioredoxin domain occupies 2-109 (SKGVITITDA…LLSFLDTHLN (108 aa)). C33 and C36 are oxidised to a cystine.

Belongs to the thioredoxin family.

In terms of biological role, participates in various redox reactions through the reversible oxidation of its active center dithiol to a disulfide and catalyzes dithiol-disulfide exchange reactions. This chain is Thioredoxin 2 (trxB), found in Nostoc sp. (strain PCC 7120 / SAG 25.82 / UTEX 2576).